The chain runs to 289 residues: ATP synthase gamma chain (289 aa).

This sequence belongs to the ATPase gamma chain family. In terms of assembly, F-type ATPases have 2 components, CF(1) - the catalytic core - and CF(0) - the membrane proton channel. CF(1) has five subunits: alpha(3), beta(3), gamma(1), delta(1), epsilon(1). CF(0) has three main subunits: a, b and c.

It localises to the cell inner membrane. Functionally, produces ATP from ADP in the presence of a proton gradient across the membrane. The gamma chain is believed to be important in regulating ATPase activity and the flow of protons through the CF(0) complex. This chain is ATP synthase gamma chain, found in Erwinia tasmaniensis (strain DSM 17950 / CFBP 7177 / CIP 109463 / NCPPB 4357 / Et1/99).